Here is a 307-residue protein sequence, read N- to C-terminus: Aspartate carbamoyltransferase catalytic subunit (307 aa).

2 residues coordinate carbamoyl phosphate: Arg-54 and Thr-55. Lys-83 contributes to the L-aspartate binding site. Residues Arg-104, His-132, and Gln-135 each coordinate carbamoyl phosphate. L-aspartate-binding residues include Arg-165 and Arg-228. Positions 267 and 268 each coordinate carbamoyl phosphate.

The protein belongs to the aspartate/ornithine carbamoyltransferase superfamily. ATCase family. Heterododecamer (2C3:3R2) of six catalytic PyrB chains organized as two trimers (C3), and six regulatory PyrI chains organized as three dimers (R2).

The catalysed reaction is carbamoyl phosphate + L-aspartate = N-carbamoyl-L-aspartate + phosphate + H(+). Its pathway is pyrimidine metabolism; UMP biosynthesis via de novo pathway; (S)-dihydroorotate from bicarbonate: step 2/3. Functionally, catalyzes the condensation of carbamoyl phosphate and aspartate to form carbamoyl aspartate and inorganic phosphate, the committed step in the de novo pyrimidine nucleotide biosynthesis pathway. The polypeptide is Aspartate carbamoyltransferase catalytic subunit (Clostridium botulinum (strain Okra / Type B1)).